Consider the following 315-residue polypeptide: MTVSSKGLLTHISQFWNMLDDLAENDPERYRNFIQQELKDGKQLCVNPEPQLCIQTKILKPNEKVLFINLCQWERIPAPQSATRPVPVSVGRPEDSAEASDAYTIIDVAYNPGVLQAAEKDQGIKDQLIRMAMLCIEERLQFTLAHSYHLTSFRLKGSIQRMKESLMGIKTDFPDLKAMTRTENTLARIRSSTVSEPNHLPEVLLTKKQASAKGRCLIEEISSSEIQVEVKKPAYELKVVKDRNEKPLKIELKVELPGIKSVSLCELSVSEVDILIEVSEMYRLCLNLPESINTEMTTAKFVKNKSALIITMPLA.

This sequence belongs to the PIH1 family.

In Mus musculus (Mouse), this protein is PIH1 domain-containing protein 2 (Pih1d2).